Here is a 353-residue protein sequence, read N- to C-terminus: UPF0283 membrane protein YcjF (353 aa).

A compositionally biased stretch (basic and acidic residues) spans 1 to 19 (MSEPLKPRIDFAEPLKEEP). Residues 1 to 35 (MSEPLKPRIDFAEPLKEEPTSAFKAQQTFSEAESR) are disordered. 3 helical membrane passes run 70–90 (MVMG…VQWT), 100–120 (VALG…GSVV), and 213–233 (ESTL…FIAW).

Belongs to the UPF0283 family.

The protein localises to the cell inner membrane. The sequence is that of UPF0283 membrane protein YcjF from Salmonella paratyphi C (strain RKS4594).